The chain runs to 356 residues: uncharacterized protein (356 aa).

NADP(+) is bound at residue 37-44 (TGASSGIG). S168 contacts substrate. Catalysis depends on Y181, which acts as the Proton acceptor.

Belongs to the short-chain dehydrogenases/reductases (SDR) family.

This is an uncharacterized protein from Bacillus subtilis (strain 168).